The chain runs to 561 residues: Corneodesmosin (561 aa).

Residues 1-32 (MGSSRAPRMGSVGGHGLMALLMAGLILPGILA) form the signal peptide. 3 disordered regions span residues 41 to 275 (PCKD…HTVS), 415 to 466 (GSVS…SSSL), and 536 to 561 (PLGPQLMDPKVSLPQGEPQGEPLEKS). The span at 61-99 (GSNSISSQGGSSSFSSQGGSSSFSSHGGSSSSQGSSSGS) shows a compositional bias: low complexity. Residues 116-127 (GSGGSRPGGSGS) show a composition bias toward gly residues. Composition is skewed to low complexity over residues 128 to 207 (QSGS…SSGS) and 224 to 248 (TSGMSQSGGSSTSQSSSSNLRPCSS). Over residues 415–430 (GSVSSKGPCSGTRIQI) the composition is skewed to polar residues. The segment covering 431–466 (TSSSSSTSYHPCSGGPSQGPCSSPGTGSISGGSSSL) has biased composition (low complexity).

Its subcellular location is the secreted. Its function is as follows. Important for the epidermal barrier integrity. The chain is Corneodesmosin (Cdsn) from Mus musculus (Mouse).